The primary structure comprises 176 residues: ATP synthase subunit b (176 aa).

The chain crosses the membrane as a helical span at residues 18–38 (GVEWGTVIVTVITFAILLALL).

The protein belongs to the ATPase B chain family. F-type ATPases have 2 components, F(1) - the catalytic core - and F(0) - the membrane proton channel. F(1) has five subunits: alpha(3), beta(3), gamma(1), delta(1), epsilon(1). F(0) has three main subunits: a(1), b(2) and c(10-14). The alpha and beta chains form an alternating ring which encloses part of the gamma chain. F(1) is attached to F(0) by a central stalk formed by the gamma and epsilon chains, while a peripheral stalk is formed by the delta and b chains.

It localises to the cell membrane. In terms of biological role, f(1)F(0) ATP synthase produces ATP from ADP in the presence of a proton or sodium gradient. F-type ATPases consist of two structural domains, F(1) containing the extramembraneous catalytic core and F(0) containing the membrane proton channel, linked together by a central stalk and a peripheral stalk. During catalysis, ATP synthesis in the catalytic domain of F(1) is coupled via a rotary mechanism of the central stalk subunits to proton translocation. Component of the F(0) channel, it forms part of the peripheral stalk, linking F(1) to F(0). The sequence is that of ATP synthase subunit b from Staphylococcus haemolyticus (strain JCSC1435).